A 330-amino-acid polypeptide reads, in one-letter code: Phospho-N-acetylmuramoyl-pentapeptide-transferase (330 aa).

10 consecutive transmembrane segments (helical) span residues 3–23, 49–69, 71–91, 111–131, 145–165, 179–199, 204–224, 228–248, 256–276, and 307–327; these read SVVL…SSFI, TPTM…AVVA, PNPA…VGLY, FLLL…YVGV, VLGP…FVIV, GLAA…AFLE, LAII…YNSH, IFMG…AAIL, PVIG…VVVF, and FWIV…FFLY.

This sequence belongs to the glycosyltransferase 4 family. MraY subfamily. The cofactor is Mg(2+).

The protein resides in the cell membrane. It carries out the reaction UDP-N-acetyl-alpha-D-muramoyl-L-alanyl-gamma-D-glutamyl-meso-2,6-diaminopimeloyl-D-alanyl-D-alanine + di-trans,octa-cis-undecaprenyl phosphate = di-trans,octa-cis-undecaprenyl diphospho-N-acetyl-alpha-D-muramoyl-L-alanyl-D-glutamyl-meso-2,6-diaminopimeloyl-D-alanyl-D-alanine + UMP. It functions in the pathway cell wall biogenesis; peptidoglycan biosynthesis. In terms of biological role, catalyzes the initial step of the lipid cycle reactions in the biosynthesis of the cell wall peptidoglycan: transfers peptidoglycan precursor phospho-MurNAc-pentapeptide from UDP-MurNAc-pentapeptide onto the lipid carrier undecaprenyl phosphate, yielding undecaprenyl-pyrophosphoryl-MurNAc-pentapeptide, known as lipid I. The chain is Phospho-N-acetylmuramoyl-pentapeptide-transferase from Rubrobacter xylanophilus (strain DSM 9941 / JCM 11954 / NBRC 16129 / PRD-1).